The sequence spans 389 residues: MKMKLPPFIELYRALIATPSISAADSALDQSNEALINLLAGWFADLGFRVEIQPVPDTRHKFNLLASIGENENGEGHGGLLLAGHTDTVPYDEGRWTRDPFTLTEHDHKLYGLGTADMKGFFAFILDAVRDIDASKLTKPLYILATADEETTMAGARYFAANTQLRPDFAIIGEPTSLQPVRAHKGHISNAIRITGQSGHSSDPARGVNAIDLMHESITQLMALRTTLQERYHNPAFTIPYPTMNFGHINGGDAANRICACCELHMDIRPLPGLTLSDLNELMTEALEPVSQRWPGRLSIDELHPPIPGYECPTDHHMVGVIEKLLGERTAVVNYCTEAPFIQQVCPTLVLGPGSINQAHQPDEFIDMAFIEPTRELIGQLVDHFCQQK.

His85 contributes to the Zn(2+) binding site. Asp87 is a catalytic residue. Asp117 serves as a coordination point for Zn(2+). Glu149 is an active-site residue. Zn(2+) is bound by residues Glu150, Glu174, and His360.

The protein belongs to the peptidase M20A family. ArgE subfamily. As to quaternary structure, homodimer. Zn(2+) is required as a cofactor. It depends on Co(2+) as a cofactor. Requires glutathione as cofactor.

Its subcellular location is the cytoplasm. It carries out the reaction N(2)-acetyl-L-ornithine + H2O = L-ornithine + acetate. It functions in the pathway amino-acid biosynthesis; L-arginine biosynthesis; L-ornithine from N(2)-acetyl-L-ornithine (linear): step 1/1. Its function is as follows. Catalyzes the hydrolysis of the amide bond of N(2)-acetylated L-amino acids. Cleaves the acetyl group from N-acetyl-L-ornithine to form L-ornithine, an intermediate in L-arginine biosynthesis pathway, and a branchpoint in the synthesis of polyamines. This chain is Acetylornithine deacetylase, found in Yersinia pseudotuberculosis serotype O:1b (strain IP 31758).